The primary structure comprises 326 residues: Lipoyl synthase (326 aa).

[4Fe-4S] cluster is bound by residues Cys68, Cys73, Cys79, Cys94, Cys98, Cys101, and Ser308. Positions 80 to 297 (FNHGTATFMI…KDVAMGLGFS (218 aa)) constitute a Radical SAM core domain.

This sequence belongs to the radical SAM superfamily. Lipoyl synthase family. The cofactor is [4Fe-4S] cluster.

Its subcellular location is the cytoplasm. The enzyme catalyses [[Fe-S] cluster scaffold protein carrying a second [4Fe-4S](2+) cluster] + N(6)-octanoyl-L-lysyl-[protein] + 2 oxidized [2Fe-2S]-[ferredoxin] + 2 S-adenosyl-L-methionine + 4 H(+) = [[Fe-S] cluster scaffold protein] + N(6)-[(R)-dihydrolipoyl]-L-lysyl-[protein] + 4 Fe(3+) + 2 hydrogen sulfide + 2 5'-deoxyadenosine + 2 L-methionine + 2 reduced [2Fe-2S]-[ferredoxin]. Its pathway is protein modification; protein lipoylation via endogenous pathway; protein N(6)-(lipoyl)lysine from octanoyl-[acyl-carrier-protein]: step 2/2. In terms of biological role, catalyzes the radical-mediated insertion of two sulfur atoms into the C-6 and C-8 positions of the octanoyl moiety bound to the lipoyl domains of lipoate-dependent enzymes, thereby converting the octanoylated domains into lipoylated derivatives. The polypeptide is Lipoyl synthase (Aeromonas salmonicida (strain A449)).